A 397-amino-acid polypeptide reads, in one-letter code: Cephalotocin receptor 1 (397 aa).

Topologically, residues 1–48 (MRYITTHPNEISTQIWNNFSSTEIWSNFSAAKNETQPIRRNQDLANAE) are extracellular. N-linked (GlcNAc...) asparagine glycosylation is found at Asn-18, Asn-27, and Asn-33. Residues 49–69 (VITLAVVIIITVIGNSIVLIT) form a helical membrane-spanning segment. Residues 70–91 (LFQRRKKLTRMHLFILHLSVTD) lie on the Cytoplasmic side of the membrane. Residues 92–112 (LFVAFFNNLPQMIWDITFLFL) form a helical membrane-spanning segment. Over 113 to 120 (GTDLLCRL) the chain is Extracellular. A disulfide bridge links Cys-118 with Cys-194. A helical membrane pass occupies residues 121–141 (VTYLQSVAMYASSYVLVATAI). Residues 142-162 (DRYFAICHPLSSHKWTTARVH) lie on the Cytoplasmic side of the membrane. Residues 163–183 (VMVFIAWMLSFLFSTPQLFIW) form a helical membrane-spanning segment. Residues 184 to 205 (SMQFSNIGLTCQATFDPEWTLK) lie on the Extracellular side of the membrane. A helical membrane pass occupies residues 206-226 (FYITWLTVAIWILPTIALTLF). The Cytoplasmic portion of the chain corresponds to 227 to 293 (YGMMCFAVWK…RGISRAKVRS (67 aa)). Residues 294-314 (VALTLSVVACCFICWSPFFVC) traverse the membrane as a helical segment. Topologically, residues 315 to 331 (QMWAAWDENAPYSGAIY) are extracellular. Residues 332–352 (TILLLLSSLNSCTNPWIYMIF) traverse the membrane as a helical segment. Over 353–397 (SVFQHRAKTSRFVNDEETTSVTVLSSRNDIRLMSMKKKLEQTARN) the chain is Cytoplasmic.

It belongs to the G-protein coupled receptor 1 family. Vasopressin/oxytocin receptor subfamily. Present in brain, buccal ganglion, gastric ganglion, olfactory lube, peduncle lobe, optical lobe, pancreas, the oviduct and the ovary.

Its subcellular location is the cell membrane. Functionally, acts as a receptor for cephalotocin. This is Cephalotocin receptor 1 from Octopus vulgaris (Common octopus).